A 497-amino-acid polypeptide reads, in one-letter code: Squalene monooxygenase (497 aa).

FAD is bound by residues 29–30, 49–50, Arg-57, Arg-159, Val-175, Asp-336, and Met-349; these read VV and ER. 2 helical membrane passes run 434-454 and 467-487; these read FLSG…TVAL and LGFL…AKVF.

The protein belongs to the squalene monooxygenase family. It depends on FAD as a cofactor.

The protein localises to the microsome membrane. The protein resides in the endoplasmic reticulum membrane. It carries out the reaction squalene + reduced [NADPH--hemoprotein reductase] + O2 = (S)-2,3-epoxysqualene + oxidized [NADPH--hemoprotein reductase] + H2O + H(+). It functions in the pathway terpene metabolism; lanosterol biosynthesis; lanosterol from farnesyl diphosphate: step 2/3. Functionally, catalyzes the stereospecific oxidation of squalene to (S)-2,3-epoxysqualene, and is considered to be a rate-limiting enzyme in steroid biosynthesis. The chain is Squalene monooxygenase (ERG1) from Eremothecium gossypii (strain ATCC 10895 / CBS 109.51 / FGSC 9923 / NRRL Y-1056) (Yeast).